The chain runs to 164 residues: UPF0114 protein Sbal223_3668 (164 aa).

4 consecutive transmembrane segments (helical) span residues 15–35, 53–73, 108–128, and 136–156; these read IMAPIYLGLSLVLIGLGIKFF, LVLVTLSLIDITLVGGLIVMV, KVAASIVAISSIHLLKIFMDV, and IMWYLLIHITFVLSAFAMGYL.

The protein belongs to the UPF0114 family.

It is found in the cell membrane. This is UPF0114 protein Sbal223_3668 from Shewanella baltica (strain OS223).